Reading from the N-terminus, the 179-residue chain is ATP synthase subunit delta (179 aa).

Belongs to the ATPase delta chain family. F-type ATPases have 2 components, F(1) - the catalytic core - and F(0) - the membrane proton channel. F(1) has five subunits: alpha(3), beta(3), gamma(1), delta(1), epsilon(1). F(0) has three main subunits: a(1), b(2) and c(10-14). The alpha and beta chains form an alternating ring which encloses part of the gamma chain. F(1) is attached to F(0) by a central stalk formed by the gamma and epsilon chains, while a peripheral stalk is formed by the delta and b chains.

It is found in the cell inner membrane. In terms of biological role, f(1)F(0) ATP synthase produces ATP from ADP in the presence of a proton or sodium gradient. F-type ATPases consist of two structural domains, F(1) containing the extramembraneous catalytic core and F(0) containing the membrane proton channel, linked together by a central stalk and a peripheral stalk. During catalysis, ATP synthesis in the catalytic domain of F(1) is coupled via a rotary mechanism of the central stalk subunits to proton translocation. Its function is as follows. This protein is part of the stalk that links CF(0) to CF(1). It either transmits conformational changes from CF(0) to CF(1) or is implicated in proton conduction. The chain is ATP synthase subunit delta from Polaromonas naphthalenivorans (strain CJ2).